The chain runs to 282 residues: CD320 antigen (282 aa).

The signal sequence occupies residues 1 to 35 (MSGGWMAQVGAWRTGALGLALLLLLGLGLGLEAAA). The Extracellular segment spans residues 36 to 229 (SPLSTPTSAQ…GDQSGSPTAY (194 aa)). The region spanning 53–90 (SCPPTKFQCRTSGLCVPLTWRCDRDLDCSDGSDEEECR) is the LDL-receptor class A 1 domain. Disulfide bonds link Cys-54-Cys-67, Cys-61-Cys-80, and Cys-74-Cys-89. Residues Trp-72, Asp-75, Asp-77, Asp-79, Asp-85, and Glu-86 each coordinate Ca(2+). The N-linked (GlcNAc...) asparagine glycan is linked to Asn-126. In terms of domain architecture, LDL-receptor class A 2 spans 131–168 (ACLAGELRCTLSDDCIPLTWRCDGHPDCPDSSDELGCG). 3 cysteine pairs are disulfide-bonded: Cys-132–Cys-145, Cys-139–Cys-158, and Cys-152–Cys-167. 6 residues coordinate Ca(2+): Trp-150, Asp-153, His-155, Asp-157, Asp-163, and Glu-164. 2 N-linked (GlcNAc...) asparagine glycosylation sites follow: Asn-195 and Asn-213. Residues 199–223 (MGPPVTLESVPSVGNATSSSAGDQS) form a disordered region. The span at 210 to 223 (SVGNATSSSAGDQS) shows a compositional bias: polar residues. A helical membrane pass occupies residues 230-250 (GVIAAAAVLSASLVTATLLLL). Over 251-282 (SWLRAQERLRPLGLLVAMKESLLLSEQKTSLP) the chain is Cytoplasmic.

In terms of assembly, interacts (via LDL-receptor class A domains) with TCN2. Detected in the germinal center (GC) of lymphoid follicles (at protein level). Expressed abundantly on follicular dendritic cells (FDCs).

The protein localises to the cell membrane. Its function is as follows. Receptor for transcobalamin saturated with cobalamin (TCbl). Plays an important role in cobalamin uptake. Plasma membrane protein that is expressed on follicular dendritic cells (FDC) and mediates interaction with germinal center B cells. Functions as costimulator to promote B cell responses to antigenic stimuli; promotes B cell differentiation and proliferation. Germinal center-B (GC-B) cells differentiate into memory B-cells and plasma cells (PC) through interaction with T-cells and follicular dendritic cells (FDC). CD320 augments the proliferation of PC precursors generated by IL-10. This Homo sapiens (Human) protein is CD320 antigen (CD320).